Consider the following 859-residue polypeptide: Bifunctional uridylyltransferase/uridylyl-removing enzyme (859 aa).

A uridylyltransferase region spans residues M1–L325. The interval S326–L682 is uridylyl-removing. An HD domain is found at V444–L566. 2 consecutive ACT domains span residues Q683–S762 and I791–V859.

The protein belongs to the GlnD family. Mg(2+) is required as a cofactor.

The catalysed reaction is [protein-PII]-L-tyrosine + UTP = [protein-PII]-uridylyl-L-tyrosine + diphosphate. It carries out the reaction [protein-PII]-uridylyl-L-tyrosine + H2O = [protein-PII]-L-tyrosine + UMP + H(+). Uridylyltransferase (UTase) activity is inhibited by glutamine, while glutamine activates uridylyl-removing (UR) activity. In terms of biological role, modifies, by uridylylation and deuridylylation, the PII regulatory proteins (GlnB and homologs), in response to the nitrogen status of the cell that GlnD senses through the glutamine level. Under low glutamine levels, catalyzes the conversion of the PII proteins and UTP to PII-UMP and PPi, while under higher glutamine levels, GlnD hydrolyzes PII-UMP to PII and UMP (deuridylylation). Thus, controls uridylylation state and activity of the PII proteins, and plays an important role in the regulation of nitrogen fixation and metabolism. The protein is Bifunctional uridylyltransferase/uridylyl-removing enzyme of Burkholderia vietnamiensis (strain G4 / LMG 22486) (Burkholderia cepacia (strain R1808)).